We begin with the raw amino-acid sequence, 217 residues long: Pyridoxine/pyridoxamine 5'-phosphate oxidase (217 aa).

Residues 66–71 (RMVLLK), 81–82 (FT), Arg87, Lys88, and Gln110 each bind FMN. Lys71 is a binding site for substrate. Positions 128, 132, and 136 each coordinate substrate. FMN-binding positions include 145–146 (QS) and Trp190. Position 196-198 (196-198 (RLH)) interacts with substrate. Arg200 lines the FMN pocket.

The protein belongs to the pyridoxamine 5'-phosphate oxidase family. As to quaternary structure, homodimer. The cofactor is FMN.

It catalyses the reaction pyridoxamine 5'-phosphate + O2 + H2O = pyridoxal 5'-phosphate + H2O2 + NH4(+). It carries out the reaction pyridoxine 5'-phosphate + O2 = pyridoxal 5'-phosphate + H2O2. It participates in cofactor metabolism; pyridoxal 5'-phosphate salvage; pyridoxal 5'-phosphate from pyridoxamine 5'-phosphate: step 1/1. The protein operates within cofactor metabolism; pyridoxal 5'-phosphate salvage; pyridoxal 5'-phosphate from pyridoxine 5'-phosphate: step 1/1. Catalyzes the oxidation of either pyridoxine 5'-phosphate (PNP) or pyridoxamine 5'-phosphate (PMP) into pyridoxal 5'-phosphate (PLP). This chain is Pyridoxine/pyridoxamine 5'-phosphate oxidase, found in Psychromonas ingrahamii (strain DSM 17664 / CCUG 51855 / 37).